A 122-amino-acid chain; its full sequence is MIQQESRLKVADNSGAREILTIKVLGGSKRRYAGIGDIIVATVKQATPGGVVKKGDVVKAVVVRTKSRVRRNDGSYISFDENAAVLIKDDKSPQGTRIFGPVARELRDNDYMKIISLAPEVL.

This sequence belongs to the universal ribosomal protein uL14 family. As to quaternary structure, part of the 50S ribosomal subunit. Forms a cluster with proteins L3 and L19. In the 70S ribosome, L14 and L19 interact and together make contacts with the 16S rRNA in bridges B5 and B8.

In terms of biological role, binds to 23S rRNA. Forms part of two intersubunit bridges in the 70S ribosome. In Levilactobacillus brevis (strain ATCC 367 / BCRC 12310 / CIP 105137 / JCM 1170 / LMG 11437 / NCIMB 947 / NCTC 947) (Lactobacillus brevis), this protein is Large ribosomal subunit protein uL14.